The primary structure comprises 191 residues: Flagellar transcriptional regulator FlhC (191 aa).

C137, C140, C157, and C160 together coordinate Zn(2+).

The protein belongs to the FlhC family. As to quaternary structure, heterohexamer composed of two FlhC and four FlhD subunits. Each FlhC binds a FlhD dimer, forming a heterotrimer, and a hexamer assembles by dimerization of two heterotrimers. Requires Zn(2+) as cofactor.

It is found in the cytoplasm. Functionally, functions in complex with FlhD as a master transcriptional regulator that regulates transcription of several flagellar and non-flagellar operons by binding to their promoter region. Activates expression of class 2 flagellar genes, including fliA, which is a flagellum-specific sigma factor that turns on the class 3 genes. Also regulates genes whose products function in a variety of physiological pathways. The sequence is that of Flagellar transcriptional regulator FlhC from Nitrosomonas eutropha (strain DSM 101675 / C91 / Nm57).